The primary structure comprises 206 residues: Large ribosomal subunit protein uL4 (206 aa).

Positions 47–75 (GTQSAKTRAEVSGGGIKPWRQKGTGRARQ) are disordered.

This sequence belongs to the universal ribosomal protein uL4 family. In terms of assembly, part of the 50S ribosomal subunit.

In terms of biological role, one of the primary rRNA binding proteins, this protein initially binds near the 5'-end of the 23S rRNA. It is important during the early stages of 50S assembly. It makes multiple contacts with different domains of the 23S rRNA in the assembled 50S subunit and ribosome. Functionally, forms part of the polypeptide exit tunnel. This is Large ribosomal subunit protein uL4 from Clostridium botulinum (strain ATCC 19397 / Type A).